The chain runs to 169 residues: Probable chemoreceptor glutamine deamidase CheD (169 aa).

Belongs to the CheD family.

The catalysed reaction is L-glutaminyl-[protein] + H2O = L-glutamyl-[protein] + NH4(+). Probably deamidates glutamine residues to glutamate on methyl-accepting chemotaxis receptors (MCPs), playing an important role in chemotaxis. The sequence is that of Probable chemoreceptor glutamine deamidase CheD from Solibacter usitatus (strain Ellin6076).